We begin with the raw amino-acid sequence, 1304 residues long: Histone-lysine N-methyltransferase met-2 (1304 aa).

Residues 1–16 are compositionally biased toward polar residues; sequence MDQQEPSNNVDTSSIL. Residues 1 to 31 are disordered; it reads MDQQEPSNNVDTSSILSDDGMETQEQSSFVT. A coiled-coil region spans residues 97 to 129; the sequence is NESEQEAVAAQRRVDAEKTAKDEAELKQQEEAE. The MBD domain occupies 834-909; sequence FHRNSPIHTP…FSFDARIDTA (76 aa). The region spanning 971–1049 is the Pre-SET domain; sequence SGCSCDGDCS…SCYNRVVQNN (79 aa). Residues Cys973, Cys975, Cys979, Cys985, Cys987, Cys1030, Cys1034, Cys1036, and Cys1041 each contribute to the Zn(2+) site. The region spanning 1052 to 1277 is the SET domain; that stretch reads YPMHIFKTAQ…AGDELTWDYQ (226 aa). Residues 1062–1064, Asp1098, and Tyr1100 contribute to the S-adenosyl-L-methionine site; that span reads SGW. Basic and acidic residues predominate over residues 1113–1122; sequence EKGREDHETD. Residues 1113 to 1201 form a disordered region; it reads EKGREDHETD…DSMEKDNIES (89 aa). The span at 1128 to 1144 shows a compositional bias: acidic residues; the sequence is DESDYDDEEGSDGDSGD. A compositionally biased stretch (basic and acidic residues) spans 1152–1165; that stretch reads KRQDSSESGEETKR. Residues 1166-1178 are compositionally biased toward basic residues; that stretch reads LTRQKRKQSKKSG. A compositionally biased stretch (basic and acidic residues) spans 1182–1201; sequence SVEKDDTTPRDSMEKDNIES. Residues Arg1231 and 1234-1235 each bind S-adenosyl-L-methionine; that span reads NH. Residues Cys1237, Cys1290, Cys1292, and Cys1297 each coordinate Zn(2+). Residues 1286–1302 enclose the Post-SET domain; that stretch reads TQLTCHCGAENCTGRLL.

The protein belongs to the class V-like SAM-binding methyltransferase superfamily.

Its subcellular location is the nucleus. It is found in the chromosome. It localises to the cytoplasm. The enzyme catalyses N(6)-methyl-L-lysyl(9)-[histone H3] + S-adenosyl-L-methionine = N(6),N(6)-dimethyl-L-lysyl(9)-[histone H3] + S-adenosyl-L-homocysteine + H(+). It carries out the reaction L-lysyl(9)-[histone H3] + S-adenosyl-L-methionine = N(6)-methyl-L-lysyl(9)-[histone H3] + S-adenosyl-L-homocysteine + H(+). In terms of biological role, histone methyltransferase which is required for the mono- and dimethylation of 'Lys-9' of histone H3. This increases the efficiency of set-25-mediated trimethylation of histone H3 'Lys-9'. Involved in the transcriptional repression of lin-3 which is required for the negative regulation of vulval cell fate specification during postembryonic development. Has a role in blocking checkpoint signaling and mediating the transcriptional silencing of meiotic sex chromosome inactivation; a mechanism which enables checkpoint proteins to distinguish between the partnerless male X chromosome and asynapsed chromosomes thereby shielding the lone X from inappropriate activation of an apoptotic program. Operates redundantly with set-25 to position chromatin at the nuclear periphery. Required for small-RNA-induced H3K9 methylation. Together with set-25, protects and stabilizes repeat-rich genomic regions by suppressing transcription-induced replication stress through methylation of H3K9. Together with spr-5, required for transgenerational fertility. The chain is Histone-lysine N-methyltransferase met-2 (met-2) from Caenorhabditis elegans.